The chain runs to 481 residues: RuvB-like helicase 2 (481 aa).

73-80 (GEPSTGKT) contacts ATP. A disordered region spans residues 453 to 481 (EEVERDPAAGGGAKRRVEGGGGDAQPMEH).

The protein belongs to the RuvB family. In terms of assembly, forms homohexameric rings. May form a dodecamer with rept made of two stacked hexameric rings. Component of the chromatin remodeling Ino80 complex. Interacts with Myc and pont. Higher expression occurs in primordia of mesoderm, anterior and posterior midgut and cephalic furrow early in gastrulation, as well as in endoderm and mesoderm lineages during germ band extension. Later in development expression is only maintained in endoderm cells. Expressed in thoracic and abdominal segment neural precursors of all embryonic chordotonal organs.

The protein resides in the nucleus. The enzyme catalyses ATP + H2O = ADP + phosphate + H(+). Its function is as follows. Acts as a transcriptional coactivator in Wg signaling caused by altered arm signaling. Pont and rept interfere antagonistically with nuclear arm signaling function, and are required to enhance or reduce arm activity, respectively. Also an essential cofactor for the normal function of Myc; required for cellular proliferation and growth. Proposed core component of the chromatin remodeling Ino80 complex which is involved in transcriptional regulation, DNA replication and probably DNA repair. This Drosophila melanogaster (Fruit fly) protein is RuvB-like helicase 2.